Consider the following 287-residue polypeptide: Glycine--tRNA ligase alpha subunit (287 aa).

This sequence belongs to the class-II aminoacyl-tRNA synthetase family. Tetramer of two alpha and two beta subunits.

Its subcellular location is the cytoplasm. The enzyme catalyses tRNA(Gly) + glycine + ATP = glycyl-tRNA(Gly) + AMP + diphosphate. The protein is Glycine--tRNA ligase alpha subunit of Campylobacter curvus (strain 525.92).